The primary structure comprises 729 residues: Catalase-peroxidase (729 aa).

Residues 1–33 (MSAHNTNESAVGKCPFHEQKEEKSVLARGAGGG) form a disordered region. Residues 15-25 (PFHEQKEEKSV) show a composition bias toward basic and acidic residues. A cross-link (tryptophyl-tyrosyl-methioninium (Trp-Tyr) (with M-255)) is located at residues 108–229 (WHSAGTYRTV…LGATEMGLIY (122 aa)). Residue His109 is the Proton acceptor of the active site. The segment at residues 229–255 (YVNPEGPEASGNPASAAPAIRATFGNM) is a cross-link (tryptophyl-tyrosyl-methioninium (Tyr-Met) (with W-108)). His270 serves as a coordination point for heme b.

This sequence belongs to the peroxidase family. Peroxidase/catalase subfamily. Homodimer or homotetramer. Heme b is required as a cofactor. Post-translationally, formation of the three residue Trp-Tyr-Met cross-link is important for the catalase, but not the peroxidase activity of the enzyme.

It catalyses the reaction H2O2 + AH2 = A + 2 H2O. It carries out the reaction 2 H2O2 = O2 + 2 H2O. Functionally, bifunctional enzyme with both catalase and broad-spectrum peroxidase activity. The chain is Catalase-peroxidase from Erwinia tasmaniensis (strain DSM 17950 / CFBP 7177 / CIP 109463 / NCPPB 4357 / Et1/99).